The chain runs to 586 residues: Proline--tRNA ligase (586 aa).

Belongs to the class-II aminoacyl-tRNA synthetase family. ProS type 1 subfamily. As to quaternary structure, homodimer.

Its subcellular location is the cytoplasm. It catalyses the reaction tRNA(Pro) + L-proline + ATP = L-prolyl-tRNA(Pro) + AMP + diphosphate. Its function is as follows. Catalyzes the attachment of proline to tRNA(Pro) in a two-step reaction: proline is first activated by ATP to form Pro-AMP and then transferred to the acceptor end of tRNA(Pro). As ProRS can inadvertently accommodate and process non-cognate amino acids such as alanine and cysteine, to avoid such errors it has two additional distinct editing activities against alanine. One activity is designated as 'pretransfer' editing and involves the tRNA(Pro)-independent hydrolysis of activated Ala-AMP. The other activity is designated 'posttransfer' editing and involves deacylation of mischarged Ala-tRNA(Pro). The misacylated Cys-tRNA(Pro) is not edited by ProRS. This is Proline--tRNA ligase from Leptospira biflexa serovar Patoc (strain Patoc 1 / Ames).